Reading from the N-terminus, the 77-residue chain is Putative regulatory protein tsl2331 (77 aa).

The protein belongs to the RemA family.

This is Putative regulatory protein tsl2331 from Thermosynechococcus vestitus (strain NIES-2133 / IAM M-273 / BP-1).